Consider the following 559-residue polypeptide: Tectonic-like complex member MKS1 (559 aa).

The 129-residue stretch at 311 to 439 (LRLFVNGEVV…TVSTWRPVEL (129 aa)) folds into the C2 B9-type domain.

Part of the tectonic-like complex (also named B9 complex). Interacts with TMEM107. Interacts with TCTN3, AHI1, TCTN1, TCTN2, CC2D2A. Interacts with FLNA. Interacts with TMEM67. Interacts with B9D1 and B9D2.

The protein localises to the cytoplasm. It localises to the cytoskeleton. Its subcellular location is the cilium basal body. The protein resides in the microtubule organizing center. It is found in the centrosome. Component of the tectonic-like complex, a complex localized at the transition zone of primary cilia and acting as a barrier that prevents diffusion of transmembrane proteins between the cilia and plasma membranes. Involved in centrosome migration to the apical cell surface during early ciliogenesis. Required for ciliary structure and function, including a role in regulating length and appropriate number through modulating centrosome duplication. Required for cell branching morphology. This Homo sapiens (Human) protein is Tectonic-like complex member MKS1 (MKS1).